A 353-amino-acid chain; its full sequence is Photosystem II protein D1 (353 aa).

Thr2 is subject to N-acetylthreonine. Thr2 carries the post-translational modification Phosphothreonine. The next 3 helical transmembrane spans lie at 29–46 (YIGWFGVLMIPTLLTATS), 118–133 (HFLLGVACYMGREWEL), and 142–156 (WIAVAYSAPVAAATA). His118 provides a ligand contact to chlorophyll a. Position 126 (Tyr126) interacts with pheophytin a. 2 residues coordinate [CaMn4O5] cluster: Asp170 and Glu189. The chain crosses the membrane as a helical span at residues 197-218 (FHMLGVAGVFGGSLFSAMHGSL). Position 198 (His198) interacts with chlorophyll a. A quinone-binding positions include His215 and 264–265 (SF). His215 contributes to the Fe cation binding site. A Fe cation-binding site is contributed by His272. The chain crosses the membrane as a helical span at residues 274-288 (FLAAWPVVGIWFTAL). Positions 332, 333, 342, and 344 each coordinate [CaMn4O5] cluster. The propeptide occupies 345–353 (SVEAPSTNG).

This sequence belongs to the reaction center PufL/M/PsbA/D family. PSII is composed of 1 copy each of membrane proteins PsbA, PsbB, PsbC, PsbD, PsbE, PsbF, PsbH, PsbI, PsbJ, PsbK, PsbL, PsbM, PsbT, PsbX, PsbY, PsbZ, Psb30/Ycf12, at least 3 peripheral proteins of the oxygen-evolving complex and a large number of cofactors. It forms dimeric complexes. Requires The D1/D2 heterodimer binds P680, chlorophylls that are the primary electron donor of PSII, and subsequent electron acceptors. It shares a non-heme iron and each subunit binds pheophytin, quinone, additional chlorophylls, carotenoids and lipids. D1 provides most of the ligands for the Mn4-Ca-O5 cluster of the oxygen-evolving complex (OEC). There is also a Cl(-1) ion associated with D1 and D2, which is required for oxygen evolution. The PSII complex binds additional chlorophylls, carotenoids and specific lipids. as cofactor. In terms of processing, tyr-161 forms a radical intermediate that is referred to as redox-active TyrZ, YZ or Y-Z. C-terminally processed by CTPA; processing is essential to allow assembly of the oxygen-evolving complex and thus photosynthetic growth.

The protein resides in the plastid. It is found in the chloroplast thylakoid membrane. It catalyses the reaction 2 a plastoquinone + 4 hnu + 2 H2O = 2 a plastoquinol + O2. Its function is as follows. Photosystem II (PSII) is a light-driven water:plastoquinone oxidoreductase that uses light energy to abstract electrons from H(2)O, generating O(2) and a proton gradient subsequently used for ATP formation. It consists of a core antenna complex that captures photons, and an electron transfer chain that converts photonic excitation into a charge separation. The D1/D2 (PsbA/PsbD) reaction center heterodimer binds P680, the primary electron donor of PSII as well as several subsequent electron acceptors. The sequence is that of Photosystem II protein D1 from Acorus calamus (Sweet flag).